The following is a 265-amino-acid chain: MTATTHAPYRLEGKVALVTGSGRGIGAAMALELGRLGAKVVVNYANSREPAEKLVQEIKELGTDAIALQANIRNVSEIVRVMDDAVAHFGGLDIVCSNAGVVSFGHLGEVTEEEFDRVFSLNTRAQFFVAREAYRHLNTHGRIILMSSNTAKEFSVPRHSVYSGSKGAIESFVRVMAKDCGDKQITVNAVAPGGTVTDMFYDVAQHYIPNGEKHSAEELQKMAATVSPLKRNGFPVDIAKVVGFLASREAEWVNGKIITVDGGAA.

Positions 25, 98, and 131 each coordinate NADP(+). Residues Ser147 and Ser148 each act as proton donor in the active site. Residues Tyr162, Lys166, and Thr197 each coordinate NADP(+). Catalysis depends on Tyr162, which acts as the Proton acceptor. Catalysis depends on Lys166, which acts as the Lowers pKa of active site Tyr.

This sequence belongs to the short-chain dehydrogenases/reductases (SDR) family.

The enzyme catalyses 3,8,9,10-tetrahydroxy-6-methyl-1,4-dihydroanthracen-1-one + NADPH + H(+) = (3R)-3,8,9,10-tetrahydroxy-6-methyl-1,2,3,4-tetrahydroanthracen-1-one + NADP(+). The protein operates within secondary metabolite biosynthesis. Short chain dehydrogenase; part of the gene cluster that mediates the biosynthesis of monodictyphenone, a prenyl xanthone derivative. The pathway begins with the synthesis of atrochrysone thioester by the polyketide synthase (PKS) mdpG. The atrochrysone carboxyl ACP thioesterase mdpF then breaks the thioester bond and releases the atrochrysone carboxylic acid from mdpG. The atrochrysone carboxylic acid is then converted to atrochrysone which is further transformed into emodin anthrone. The next step is performed by the anthrone oxygenase mdpH that catalyzes the oxidation of emodinanthrone to emodin. Emodin is further modified to yield monodictyphenone via several steps involving mdpB, mdpC mdpJ, mdpK and mdpL. The short chain dehydrogenase mdpC converts the tautomers of emodin hydroquinone into the 3-hydroxy-3,4-dihydroan-thracen-1(2H)-one derivative. These enzymes with xptA, xptB and xptC are also proposed to be involved in the synthesis of shamixanthone from emodin. Especially, direct reduction of emodin by the short chain dehydrogenase mdpC followed by dehydration catalyzed by the scytalone dehydratase-like protein mdpB gives loss of oxygen and formation of chrysophanol intermediate in two simple steps. This chain is Short chain dehydrogenase mdpC, found in Emericella nidulans (strain FGSC A4 / ATCC 38163 / CBS 112.46 / NRRL 194 / M139) (Aspergillus nidulans).